The sequence spans 624 residues: UvrABC system protein C (624 aa).

The GIY-YIG domain occupies 25 to 104 (AEPGVYFMRD…IKQHQPHFNV (80 aa)). One can recognise a UVR domain in the interval 214–249 (SELIDTLTPQMEAAAENLNFEQAARIRDQINGLKTL).

This sequence belongs to the UvrC family. As to quaternary structure, interacts with UvrB in an incision complex.

The protein localises to the cytoplasm. In terms of biological role, the UvrABC repair system catalyzes the recognition and processing of DNA lesions. UvrC both incises the 5' and 3' sides of the lesion. The N-terminal half is responsible for the 3' incision and the C-terminal half is responsible for the 5' incision. The protein is UvrABC system protein C of Cyanothece sp. (strain PCC 7425 / ATCC 29141).